The chain runs to 57 residues: Andropin (57 aa).

The signal sequence occupies residues 1–23 (MKYFVVLVVLALILAITVGPSDA).

This sequence belongs to the andropin family. In terms of tissue distribution, ejaculatory duct of adult males.

It is found in the secreted. Functionally, male-specific peptide with moderate activity against Gram-positive bacteria. In Drosophila mauritiana (Fruit fly), this protein is Andropin (Anp).